Reading from the N-terminus, the 535-residue chain is Large neutral amino acids transporter small subunit 2 (535 aa).

A compositionally biased stretch (basic residues) spans 1–10 (MEKGARHRHN). The disordered stretch occupies residues 1–30 (MEKGARHRHNTDKNHAGGSESEDFPEASSG). Topologically, residues 1-44 (MEKGARHRHNTDKNHAGGSESEDFPEASSGGGGVALKKEIGLVS) are cytoplasmic. Phosphoserine occurs at positions 19, 28, and 29. The helical transmembrane segment at 45–65 (ACGIIVGNIIGSGIFVSPKGV) threads the bilayer. Ile-53 lines the L-leucine pocket. Residues 66 to 73 (LENAGSVG) are Extracellular-facing. Residues 74–95 (LAVIVWIVTGLITAVGALCYAE) traverse the membrane as a helical segment. At 96–116 (LGVTIPKSGGDYSYVKDIFGG) the chain is on the cytoplasmic side. The helical transmembrane segment at 117 to 149 (LAGFLRLWIAVLVIYPTNQAVIALTFSNYVLQP) threads the bilayer. L-tryptophan is bound at residue Asn-134. The Extracellular segment spans residues 150-157 (LFPTCFPP). A helical membrane pass occupies residues 158-178 (DSGLRLLAAICLLLLTWVNCS). Residues 179–181 (SVR) lie on the Cytoplasmic side of the membrane. Residues 182 to 210 (WATRVQDIFTAGKLLALALIIIMGVVQIC) traverse the membrane as a helical segment. Topologically, residues 211–230 (KGEYFWLEPKNAFDNFQEPD) are extracellular. The chain crosses the membrane as a helical span at residues 231–252 (IGLIALAFLQGSFAYGGWNFLN). Gly-246 contributes to the L-leucine binding site. Over 253-265 (YVTEELVDPYKNL) the chain is Cytoplasmic. The chain crosses the membrane as a helical span at residues 266–287 (PRAIFISIPLVTFVYVFANVAY). Residues 288–312 (ITAMSPQELLASNAVAVTFGEKLLG) lie on the Extracellular side of the membrane. Residues 313-338 (VMAWIMPISVALSTFGGVNGSLFTSS) form a helical membrane-spanning segment. The Cytoplasmic portion of the chain corresponds to 339–364 (RLFFAGAREGHLPSVLAMIHVKRCTP). A helical transmembrane segment spans residues 365–382 (IPALLFTCLSTLLMLVTS). At 383 to 386 (DMYT) the chain is on the extracellular side. The chain crosses the membrane as a helical span at residues 387 to 408 (LINYVGFINYLFYGVTVAGQIV). Asn-395 lines the L-tryptophan pocket. At 409–423 (LRWKKPDIPRPIKIN) the chain is on the cytoplasmic side. The next 2 membrane-spanning stretches (helical) occupy residues 424-446 (LLFP…WSEP) and 447-466 (VVCG…YFLG). Residues 467–535 (VYWQHKPKCF…DKDSLEQSQP (69 aa)) lie on the Cytoplasmic side of the membrane. Residues 500–535 (GGSGTEGTREDMEEQQQPICQPSPGKDKDSLEQSQP) are disordered. The segment covering 524 to 535 (GKDKDSLEQSQP) has biased composition (basic and acidic residues). Residue Ser-529 is modified to Phosphoserine.

The protein belongs to the amino acid-polyamine-organocation (APC) superfamily. L-type amino acid transporter (LAT) (TC 2.A.3.8) family. Disulfide-linked heterodimer composed of the catalytic light chain subunit SLC7A8 and the heavy chain subunit SLC3A2. SLC3A2 acts as a chaperone for correct plasma membrane trafficking and stabilization of SLC7A8 and modulates the substrate affinity and specificity of SLC7A8. ICAM-1 associates with the heterodimer SLC3A2/SLC7A8; facilitates leucine uptake. In terms of tissue distribution, mainly expressed in kidney and small intestine.

It localises to the cell membrane. The protein resides in the basolateral cell membrane. It catalyses the reaction L-histidine(in) + L-phenylalanine(out) = L-histidine(out) + L-phenylalanine(in). It carries out the reaction L-tryptophan(in) + L-phenylalanine(out) = L-tryptophan(out) + L-phenylalanine(in). The enzyme catalyses L-isoleucine(in) + L-phenylalanine(out) = L-isoleucine(out) + L-phenylalanine(in). The catalysed reaction is L-valine(in) + L-phenylalanine(out) = L-valine(out) + L-phenylalanine(in). It catalyses the reaction L-leucine(in) + L-phenylalanine(out) = L-leucine(out) + L-phenylalanine(in). It carries out the reaction L-glutamine(in) + L-phenylalanine(out) = L-glutamine(out) + L-phenylalanine(in). The enzyme catalyses L-cysteine(in) + L-phenylalanine(out) = L-cysteine(out) + L-phenylalanine(in). The catalysed reaction is L-phenylalanine(out) + L-methionine(in) = L-phenylalanine(in) + L-methionine(out). It catalyses the reaction L-leucine(out) + L-methionine(in) = L-leucine(in) + L-methionine(out). It carries out the reaction L-cysteine(out) + L-methionine(in) = L-cysteine(in) + L-methionine(out). The enzyme catalyses S-methylmercury-L-cysteine(out) + L-methionine(in) = S-methylmercury-L-cysteine(in) + L-methionine(out). The catalysed reaction is S-methylmercury-L-cysteine(in) + L-leucine(out) = S-methylmercury-L-cysteine(out) + L-leucine(in). It catalyses the reaction S-methylmercury-L-cysteine(in) + L-phenylalanine(out) = S-methylmercury-L-cysteine(out) + L-phenylalanine(in). It carries out the reaction L-phenylalanine(out) + L-serine(in) = L-phenylalanine(in) + L-serine(out). The enzyme catalyses L-phenylalanine(out) + glycine(in) = L-phenylalanine(in) + glycine(out). The catalysed reaction is L-phenylalanine(out) + L-alanine(in) = L-phenylalanine(in) + L-alanine(out). It catalyses the reaction 3,3',5-triiodo-L-thyronine(out) = 3,3',5-triiodo-L-thyronine(in). It carries out the reaction 3,3'-diiodo-L-thyronine(out) = 3,3'-diiodo-L-thyronine(in). The enzyme catalyses L-dopa(out) + L-phenylalanine(in) = L-dopa(in) + L-phenylalanine(out). The transporter activity is inhibited by 2-aminobicyclo-(2,2,1)heptane-2-carboxylic acid (BCH) (a specific inhibitor of system L transport). Its function is as follows. Associates with SLC3A2 to form a functional heterodimeric complex that translocates small and large neutral amino acids with broad specificity and a stoichiometry of 1:1. Functions as amino acid antiporter mediating the influx of extracellular essential amino acids mainly in exchange with the efflux of highly concentrated intracellular amino acids. Has relatively symmetrical selectivities but strongly asymmetrical substrate affinities at both the intracellular and extracellular sides of the transporter. This asymmetry allows SLC7A8 to regulate intracellular amino acid pools (mM concentrations) by exchange with external amino acids (uM concentration range), equilibrating the relative concentrations of different amino acids across the plasma membrane instead of mediating their net uptake. May play an essential role in the reabsorption of neutral amino acids from the epithelial cells to the bloodstream in the kidney. Involved in the uptake of methylmercury (MeHg) when administered as the L-cysteine or D,L-homocysteine complexes, and hence plays a role in metal ion homeostasis and toxicity. Involved in the cellular activity of small molecular weight nitrosothiols, via the stereoselective transport of L-nitrosocysteine (L-CNSO) across the transmembrane. Imports the thyroid hormone diiodothyronine (T2) and to a smaller extent triiodothyronine (T3) but not rT 3 or thyroxine (T4). Mediates the uptake of L-DOPA. May participate in auditory function. This chain is Large neutral amino acids transporter small subunit 2, found in Oryctolagus cuniculus (Rabbit).